We begin with the raw amino-acid sequence, 220 residues long: Protein-L-isoaspartate O-methyltransferase (220 aa).

Serine 65 is an active-site residue.

It belongs to the methyltransferase superfamily. L-isoaspartyl/D-aspartyl protein methyltransferase family.

It is found in the cytoplasm. It catalyses the reaction [protein]-L-isoaspartate + S-adenosyl-L-methionine = [protein]-L-isoaspartate alpha-methyl ester + S-adenosyl-L-homocysteine. Catalyzes the methyl esterification of L-isoaspartyl residues in peptides and proteins that result from spontaneous decomposition of normal L-aspartyl and L-asparaginyl residues. It plays a role in the repair and/or degradation of damaged proteins. This is Protein-L-isoaspartate O-methyltransferase (pcm) from Pyrococcus horikoshii (strain ATCC 700860 / DSM 12428 / JCM 9974 / NBRC 100139 / OT-3).